The primary structure comprises 117 residues: UPF0342 protein Bcer98_0695 (117 aa).

Belongs to the UPF0342 family.

The chain is UPF0342 protein Bcer98_0695 from Bacillus cytotoxicus (strain DSM 22905 / CIP 110041 / 391-98 / NVH 391-98).